A 202-amino-acid polypeptide reads, in one-letter code: UMP-CMP kinase 3 (202 aa).

An ATP-binding site is contributed by 24 to 29 (GSGKGT). The tract at residues 44 to 73 (SAGDLLRAEIKSGSENGTMIQNMIKEGKIV) is NMP. A ribonucleoside 5'-phosphate is bound by residues R50, 71-73 (KIV), and 98-101 (GFPR). A CMP-binding site is contributed by N105. The interval 136–144 (GRNQGREDD) is LID. Residue R137 participates in ATP binding. A ribonucleoside 5'-phosphate is bound by residues R141 and R152. K180 contributes to the ATP binding site.

Monomer. Requires Mg(2+) as cofactor.

It localises to the cytoplasm. The protein localises to the nucleus. The catalysed reaction is CMP + ATP = CDP + ADP. It catalyses the reaction dCMP + ATP = dCDP + ADP. It carries out the reaction UMP + ATP = UDP + ADP. Its function is as follows. Catalyzes the phosphorylation of pyrimidine nucleoside monophosphates at the expense of ATP. Plays an important role in de novo pyrimidine nucleotide biosynthesis. Has preference for UMP and CMP as phosphate acceptors. Does not act on dCMP and dUMP. In Arabidopsis thaliana (Mouse-ear cress), this protein is UMP-CMP kinase 3 (UMK3).